The primary structure comprises 279 residues: Fatty-acid-binding protein 1 (279 aa).

Residues Arg103, Tyr116, and Ser183 each contribute to the dodecanoate site.

It belongs to the chalcone isomerase family. Expressed in developing cotyledons, young seedlings, roots, seeds, embryos, macrospores, preanthesis and tapetum. Restricted to developing and reproductive tissues.

The protein localises to the plastid. Its subcellular location is the chloroplast stroma. Its function is as follows. Fatty-acid-binding protein. Interacts preferentially with saturated fatty acid. May be involved in alpha-linolenic (C18:3) metabolism. In Arabidopsis thaliana (Mouse-ear cress), this protein is Fatty-acid-binding protein 1 (FAP1).